A 259-amino-acid polypeptide reads, in one-letter code: Putative zinc metalloprotease Rip2 (259 aa).

2 helical membrane passes run 14–34 (PIFL…WIAA) and 39–59 (PLSY…SLCL). H60 provides a ligand contact to Zn(2+). E61 is an active-site residue. H64 contacts Zn(2+). The next 4 helical transmembrane spans lie at 96-116 (LGLP…GAVY), 129-149 (IVSL…LGLT), 159-179 (VFWS…VLNL), and 203-223 (LAPA…TPAL).

Belongs to the peptidase M50B family. Zn(2+) is required as a cofactor.

It is found in the cell membrane. The chain is Putative zinc metalloprotease Rip2 (rip2) from Mycolicibacterium smegmatis (strain ATCC 700084 / mc(2)155) (Mycobacterium smegmatis).